The following is a 401-amino-acid chain: Argininosuccinate synthase (401 aa).

8–16 (AYSGGLDTS) contacts ATP. Tyr-85 is an L-citrulline binding site. ATP is bound at residue Gly-115. The L-aspartate site is built by Thr-117, Asn-121, and Asp-122. Asn-121 is a binding site for L-citrulline. L-citrulline-binding residues include Arg-125, Ser-173, Glu-258, and Tyr-270.

This sequence belongs to the argininosuccinate synthase family. Type 1 subfamily. As to quaternary structure, homotetramer.

The protein localises to the cytoplasm. It catalyses the reaction L-citrulline + L-aspartate + ATP = 2-(N(omega)-L-arginino)succinate + AMP + diphosphate + H(+). It functions in the pathway amino-acid biosynthesis; L-arginine biosynthesis; L-arginine from L-ornithine and carbamoyl phosphate: step 2/3. This Staphylococcus epidermidis (strain ATCC 35984 / DSM 28319 / BCRC 17069 / CCUG 31568 / BM 3577 / RP62A) protein is Argininosuccinate synthase.